Here is a 505-residue protein sequence, read N- to C-terminus: Glutamate--tRNA ligase (505 aa).

Residues Pro-16 to Thr-26 carry the 'HIGH' region motif. Positions Lys-257–Arg-261 match the 'KMSKS' region motif. Lys-260 lines the ATP pocket.

This sequence belongs to the class-I aminoacyl-tRNA synthetase family. Glutamate--tRNA ligase type 1 subfamily. In terms of assembly, monomer.

The protein localises to the cytoplasm. It catalyses the reaction tRNA(Glu) + L-glutamate + ATP = L-glutamyl-tRNA(Glu) + AMP + diphosphate. In terms of biological role, catalyzes the attachment of glutamate to tRNA(Glu) in a two-step reaction: glutamate is first activated by ATP to form Glu-AMP and then transferred to the acceptor end of tRNA(Glu). This chain is Glutamate--tRNA ligase, found in Psychrobacter sp. (strain PRwf-1).